Consider the following 607-residue polypeptide: Polyadenylate-binding protein 1-like (607 aa).

RRM domains are found at residues 11 to 89 (SSLY…WSHR), 99 to 175 (GNIF…HFKS), 191 to 268 (TNIY…RAQK), and 294 to 370 (VNLY…LAQR). One can recognise a PABC domain in the interval 523 to 600 (HQPLTVSMLA…AVAVLQVHRE (78 aa)).

It belongs to the polyadenylate-binding protein type-1 family. As to expression, expressed in ovary and testis.

It is found in the cytoplasm. Its function is as follows. Poly(A)-binding protein involved in oocyte maturation and early embryo development. It is required for cytosolic mRNA polyadenylation and translational activation of maternally stored mRNA in oocytes. The protein is Polyadenylate-binding protein 1-like of Mus musculus (Mouse).